The chain runs to 180 residues: UPF0340 protein LL0489 (180 aa).

The protein belongs to the UPF0340 family.

The chain is UPF0340 protein LL0489 (yeiF) from Lactococcus lactis subsp. lactis (strain IL1403) (Streptococcus lactis).